The primary structure comprises 151 residues: UPF0208 membrane protein KPN78578_26420 (151 aa).

The next 2 membrane-spanning stretches (helical) occupy residues 46 to 65 and 69 to 91; these read YAIR…QIAL and LGPA…WWLG.

This sequence belongs to the UPF0208 family.

It localises to the cell inner membrane. In Klebsiella pneumoniae subsp. pneumoniae (strain ATCC 700721 / MGH 78578), this protein is UPF0208 membrane protein KPN78578_26420.